The sequence spans 263 residues: Endonuclease 8 (263 aa).

Proline 2 (schiff-base intermediate with DNA) is an active-site residue. Glutamate 3 acts as the Proton donor in catalysis. Lysine 53 serves as the catalytic Proton donor; for beta-elimination activity. Residues glutamine 70, arginine 125, and asparagine 169 each contribute to the DNA site. Residues 229–263 form an FPG-type zinc finger; the sequence is KVFHRDGELCERCGGIIEKTTLSSRPFYWCPGCQH. Catalysis depends on arginine 253, which acts as the Proton donor; for delta-elimination activity.

The protein belongs to the FPG family. The cofactor is Zn(2+).

The catalysed reaction is 2'-deoxyribonucleotide-(2'-deoxyribose 5'-phosphate)-2'-deoxyribonucleotide-DNA = a 3'-end 2'-deoxyribonucleotide-(2,3-dehydro-2,3-deoxyribose 5'-phosphate)-DNA + a 5'-end 5'-phospho-2'-deoxyribonucleoside-DNA + H(+). Functionally, involved in base excision repair of DNA damaged by oxidation or by mutagenic agents. Acts as a DNA glycosylase that recognizes and removes damaged bases. Has a preference for oxidized pyrimidines, such as thymine glycol, 5,6-dihydrouracil and 5,6-dihydrothymine. Has AP (apurinic/apyrimidinic) lyase activity and introduces nicks in the DNA strand. Cleaves the DNA backbone by beta-delta elimination to generate a single-strand break at the site of the removed base with both 3'- and 5'-phosphates. This is Endonuclease 8 from Escherichia coli O157:H7.